The chain runs to 448 residues: MHFVAISINHRTADVTLREQVAFRDDALRLAHEDLYETKAILENVILSTCNRTEVYAIVDQVHTGRYYIQRFLARSFGFEVDDIKDMSQVKVGDDAVEHLLRVTSGLDSIVLGETQILGQMRDAFFLAQNTGTTGTIFNHLFKQAITFAKKAHSETDIADNAVSVSYAAVELAKKVFGKLKSKHAVVIGAGEMGELSLLNLLGSGISNVTIVNRTLSKAKILAEKHNVSYDSLSALPSLLETTDIVISSTSAEDYIITNSMVKTISETRKLDSLVLIDIAVPRDIEPGIDAITNIFNYDVDDLKDLVDANLRERQLAAETIAGQIPEEIDSHNEWVNMLGVVPVIRALREKAMNIQAETMESIDRKLPDLSERERKVISKHTKSIINQMLKDPIKQAKELSTDKKSNEKLELFQNIFDIEAEDPREKAKLEKESRAKEILAHRIFSFE.

Substrate contacts are provided by residues 49–52 (TCNR), Ser109, 114–116 (ETQ), and Gln120. Cys50 functions as the Nucleophile in the catalytic mechanism. An NADP(+)-binding site is contributed by 189 to 194 (GAGEMG).

This sequence belongs to the glutamyl-tRNA reductase family. As to quaternary structure, homodimer.

The catalysed reaction is (S)-4-amino-5-oxopentanoate + tRNA(Glu) + NADP(+) = L-glutamyl-tRNA(Glu) + NADPH + H(+). The protein operates within porphyrin-containing compound metabolism; protoporphyrin-IX biosynthesis; 5-aminolevulinate from L-glutamyl-tRNA(Glu): step 1/2. In terms of biological role, catalyzes the NADPH-dependent reduction of glutamyl-tRNA(Glu) to glutamate 1-semialdehyde (GSA). The sequence is that of Glutamyl-tRNA reductase from Staphylococcus epidermidis (strain ATCC 12228 / FDA PCI 1200).